Reading from the N-terminus, the 323-residue chain is Beta-ketoacyl-[acyl-carrier-protein] synthase III (323 aa).

Catalysis depends on residues C114 and H250. Residues 251-255 form an ACP-binding region; sequence QANIR. N280 is a catalytic residue.

This sequence belongs to the thiolase-like superfamily. FabH family. In terms of assembly, homodimer.

It is found in the cytoplasm. It carries out the reaction malonyl-[ACP] + acetyl-CoA + H(+) = 3-oxobutanoyl-[ACP] + CO2 + CoA. It participates in lipid metabolism; fatty acid biosynthesis. In terms of biological role, catalyzes the condensation reaction of fatty acid synthesis by the addition to an acyl acceptor of two carbons from malonyl-ACP. Catalyzes the first condensation reaction which initiates fatty acid synthesis and may therefore play a role in governing the total rate of fatty acid production. Possesses both acetoacetyl-ACP synthase and acetyl transacylase activities. Its substrate specificity determines the biosynthesis of branched-chain and/or straight-chain of fatty acids. The sequence is that of Beta-ketoacyl-[acyl-carrier-protein] synthase III from Ruegeria pomeroyi (strain ATCC 700808 / DSM 15171 / DSS-3) (Silicibacter pomeroyi).